The following is a 105-amino-acid chain: UPF0060 membrane protein Rmet_4032 (105 aa).

Helical transmembrane passes span 4-24, 28-48, 60-80, and 82-102; these read VGLY…PYLW, GASP…AWLL, AAYG…VDGV, and PSPW…IIVF.

Belongs to the UPF0060 family.

It is found in the cell inner membrane. The sequence is that of UPF0060 membrane protein Rmet_4032 from Cupriavidus metallidurans (strain ATCC 43123 / DSM 2839 / NBRC 102507 / CH34) (Ralstonia metallidurans).